The chain runs to 487 residues: Steroid 21-hydroxylase (487 aa).

Heme b is bound by residues arginine 92 and lysine 117. Arginine 228 is a binding site for 17alpha-hydroxyprogesterone. A progesterone-binding site is contributed by arginine 228. Positions 357, 418, and 420 each coordinate heme b.

The protein belongs to the cytochrome P450 family. Heme b serves as cofactor.

It is found in the endoplasmic reticulum membrane. The protein resides in the microsome membrane. The enzyme catalyses progesterone + reduced [NADPH--hemoprotein reductase] + O2 = 21-hydroxyprogesterone + oxidized [NADPH--hemoprotein reductase] + H2O + H(+). The catalysed reaction is 17alpha-hydroxyprogesterone + reduced [NADPH--hemoprotein reductase] + O2 = 11-deoxycortisol + oxidized [NADPH--hemoprotein reductase] + H2O + H(+). A cytochrome P450 monooxygenase that plays a major role in adrenal steroidogenesis. Catalyzes the hydroxylation at C-21 of progesterone and 17alpha-hydroxyprogesterone to respectively form 11-deoxycorticosterone and 11-deoxycortisol, intermediate metabolites in the biosynthetic pathway of mineralocorticoids and glucocorticoids. Mechanistically, uses molecular oxygen inserting one oxygen atom into a substrate, and reducing the second into a water molecule, with two electrons provided by NADPH via cytochrome P450 reductase (CPR; NADPH-ferrihemoprotein reductase). This is Steroid 21-hydroxylase (Cyp21) from Mus musculus (Mouse).